The chain runs to 324 residues: MLEQGLLVTAGVAFLISVALSPLFIPFLRKLKFGQSIRDEGPKSHQKKSGTPTMGGIVIYVSMMVTSLIMAIKFNHLGAEVSLLLLVTFGYGLIGFLDDYIKVVKKRNLGLTSKQKLVGQLVIAIAFFLIGKGQAFHTYIMIPGTDVKFELGWAYFVLVLFMLIGGSNAVNLTDGLDGLLSGTAAIAFGAFSIIAVAQEQFGVAIFCMAVVGAVLGFLVFNANPAKVFMGDTGSLALGGAIAAVAILLKQELLLVIIGGVFVMETLSVIIQVISFKTTGKRVFKMSPLHHHYELCGWSEWRVVVTFWSVGFLLAVLGIYIGVWM.

The next 10 helical transmembrane spans lie at 5–25 (GLLV…PLFI), 52–72 (PTMG…IMAI), 77–97 (LGAE…IGFL), 122–142 (VIAI…YIMI), 149–169 (FELG…GSNA), 176–196 (LDGL…IIAV), 201–221 (FGVA…LVFN), 227–247 (VFMG…VAIL), 253–273 (LLVI…IQVI), and 302–322 (VVVT…YIGV).

The protein belongs to the glycosyltransferase 4 family. MraY subfamily. Requires Mg(2+) as cofactor.

It is found in the cell membrane. It catalyses the reaction UDP-N-acetyl-alpha-D-muramoyl-L-alanyl-gamma-D-glutamyl-meso-2,6-diaminopimeloyl-D-alanyl-D-alanine + di-trans,octa-cis-undecaprenyl phosphate = di-trans,octa-cis-undecaprenyl diphospho-N-acetyl-alpha-D-muramoyl-L-alanyl-D-glutamyl-meso-2,6-diaminopimeloyl-D-alanyl-D-alanine + UMP. Its pathway is cell wall biogenesis; peptidoglycan biosynthesis. Functionally, catalyzes the initial step of the lipid cycle reactions in the biosynthesis of the cell wall peptidoglycan: transfers peptidoglycan precursor phospho-MurNAc-pentapeptide from UDP-MurNAc-pentapeptide onto the lipid carrier undecaprenyl phosphate, yielding undecaprenyl-pyrophosphoryl-MurNAc-pentapeptide, known as lipid I. This Bacillus cereus (strain AH820) protein is Phospho-N-acetylmuramoyl-pentapeptide-transferase.